Here is a 347-residue protein sequence, read N- to C-terminus: NADH-ubiquinone oxidoreductase chain 2 (347 aa).

Helical transmembrane passes span 3–23 (PPIL…VLMS), 25–45 (HWLM…PILM), 67–87 (SMLL…WAVL), 150–170 (NPHL…WGGL), 178–198 (ILAY…TYSP), 201–221 (MLLN…LFMF), 237–257 (LPLI…LPPL), 274–294 (NMII…YFYM), and 323–343 (MTML…TPMM).

The protein belongs to the complex I subunit 2 family. Core subunit of respiratory chain NADH dehydrogenase (Complex I) which is composed of 45 different subunits. Interacts with TMEM242.

The protein resides in the mitochondrion inner membrane. It catalyses the reaction a ubiquinone + NADH + 5 H(+)(in) = a ubiquinol + NAD(+) + 4 H(+)(out). Its function is as follows. Core subunit of the mitochondrial membrane respiratory chain NADH dehydrogenase (Complex I) which catalyzes electron transfer from NADH through the respiratory chain, using ubiquinone as an electron acceptor. Essential for the catalytic activity and assembly of complex I. The sequence is that of NADH-ubiquinone oxidoreductase chain 2 from Mustela kathiah (Yellow-bellied weasel).